The following is a 230-amino-acid chain: Orotidine 5'-phosphate decarboxylase (230 aa).

Substrate is bound by residues aspartate 11, lysine 34, 61–70 (DLKLHDIPNT), threonine 117, arginine 179, glutamine 188, glycine 208, and arginine 209. Lysine 63 serves as the catalytic Proton donor.

It belongs to the OMP decarboxylase family. Type 1 subfamily. Homodimer.

The catalysed reaction is orotidine 5'-phosphate + H(+) = UMP + CO2. The protein operates within pyrimidine metabolism; UMP biosynthesis via de novo pathway; UMP from orotate: step 2/2. Catalyzes the decarboxylation of orotidine 5'-monophosphate (OMP) to uridine 5'-monophosphate (UMP). This Streptococcus equi subsp. zooepidemicus (strain H70) protein is Orotidine 5'-phosphate decarboxylase.